A 534-amino-acid polypeptide reads, in one-letter code: Prolyl 4-hydroxylase subunit alpha-1 (534 aa).

A signal peptide spans 1 to 17 (MIWYILVVGILLPQSLA). The N-linked (GlcNAc...) asparagine glycan is linked to Asn-113. The TPR repeat unit spans residues 205-238 (VSVLDYLSYAVYQQGDLDKALLLTKKLLELDPEH). The segment at 258–277 (ANKSSSDDQSDQKTTLKKKG) is disordered. Residue Asn-259 is glycosylated (N-linked (GlcNAc...) asparagine). In terms of domain architecture, Fe2OG dioxygenase spans 411–519 (TAEELQVANY…KWVSNKWLHE (109 aa)). The Fe cation site is built by His-429, Asp-431, and His-500. Lys-510 provides a ligand contact to 2-oxoglutarate.

It belongs to the P4HA family. As to quaternary structure, heterotetramer of two alpha-1 chains and two beta chains (P4HB)(the beta chain is the multi-functional PDI), where P4HB plays the role of a structural subunit; this tetramer catalyzes the formation of 4-hydroxyproline in collagen. The cofactor is Fe(2+). L-ascorbate is required as a cofactor.

It localises to the endoplasmic reticulum lumen. The catalysed reaction is L-prolyl-[collagen] + 2-oxoglutarate + O2 = trans-4-hydroxy-L-prolyl-[collagen] + succinate + CO2. Functionally, catalyzes the post-translational formation of 4-hydroxyproline in -Xaa-Pro-Gly- sequences in collagens and other proteins. The protein is Prolyl 4-hydroxylase subunit alpha-1 (P4HA1) of Bos taurus (Bovine).